The following is a 443-amino-acid chain: Tol-Pal system protein TolB (443 aa).

Residues 1–33 (MKIGIINTKIRTVFSAFACMIAASLVCTMPARA) form the signal peptide.

Belongs to the TolB family. In terms of assembly, the Tol-Pal system is composed of five core proteins: the inner membrane proteins TolA, TolQ and TolR, the periplasmic protein TolB and the outer membrane protein Pal. They form a network linking the inner and outer membranes and the peptidoglycan layer.

The protein localises to the periplasm. In terms of biological role, part of the Tol-Pal system, which plays a role in outer membrane invagination during cell division and is important for maintaining outer membrane integrity. In Brucella ovis (strain ATCC 25840 / 63/290 / NCTC 10512), this protein is Tol-Pal system protein TolB.